The primary structure comprises 436 residues: Glutamyl-tRNA reductase (436 aa).

Substrate contacts are provided by residues 52-55, Ser105, 110-112, and Gln116; these read TCHR and EDQ. Cys53 (nucleophile) is an active-site residue. 184-189 serves as a coordination point for NADP(+); the sequence is GAGEMG.

Belongs to the glutamyl-tRNA reductase family. As to quaternary structure, homodimer.

It carries out the reaction (S)-4-amino-5-oxopentanoate + tRNA(Glu) + NADP(+) = L-glutamyl-tRNA(Glu) + NADPH + H(+). Its pathway is porphyrin-containing compound metabolism; protoporphyrin-IX biosynthesis; 5-aminolevulinate from L-glutamyl-tRNA(Glu): step 1/2. Functionally, catalyzes the NADPH-dependent reduction of glutamyl-tRNA(Glu) to glutamate 1-semialdehyde (GSA). This is Glutamyl-tRNA reductase from Halobacterium salinarum (strain ATCC 29341 / DSM 671 / R1).